Here is a 658-residue protein sequence, read N- to C-terminus: NADPH-dependent diflavin oxidoreductase 1 (658 aa).

The Flavodoxin-like domain occupies 16–160; that stretch reads LTILYMTQTG…ELGPWMNRFW (145 aa). FMN contacts are provided by residues 22–27, 69–72, 107–116, and Asp142; these read TQTGTS, STTG, and LGDSTYPRFC. The region spanning 215-502 is the FAD-binding FR-type domain; it reads QGWSISILDK…IKPGYLTLPP (288 aa). Residues Arg400, 430–433, and 474–477 each bind FAD; these read REFS and GLCT. NADP(+) is bound by residues Thr514, 574-575, and 580-584; these read SR and KTYVQ. Trp657 contacts FAD.

The protein belongs to the NADPH-dependent diflavin oxidoreductase NDOR1 family. This sequence in the N-terminal section; belongs to the flavodoxin family. It in the C-terminal section; belongs to the flavoprotein pyridine nucleotide cytochrome reductase family. As to quaternary structure, interacts with DRE2; as part of the cytosolic iron-sulfur (Fe-S) protein assembly (CIA) machinery. FAD serves as cofactor. Requires FMN as cofactor.

The protein resides in the cytoplasm. The protein localises to the mitochondrion. It carries out the reaction 2 oxidized [2Fe-2S]-[protein] + NADPH = 2 reduced [2Fe-2S]-[protein] + NADP(+) + H(+). Functionally, NADPH-dependent reductase which is a central component of the cytosolic iron-sulfur (Fe-S) protein assembly (CIA) machinery. Transfers electrons from NADPH via its FAD and FMN prosthetic groups to the [2Fe-2S] cluster of DRE2, another key component of the CIA machinery. In turn, this reduced cluster provides electrons for assembly of cytosolic iron-sulfur cluster proteins. Positively controls H(2)O(2)-induced cell death. The sequence is that of NADPH-dependent diflavin oxidoreductase 1 from Mycosarcoma maydis (Corn smut fungus).